A 175-amino-acid polypeptide reads, in one-letter code: uncharacterized protein (175 aa).

A compositionally biased stretch (polar residues) spans 1–14 (MNTSSRIQLPSSND). Disordered regions lie at residues 1-31 (MNTS…SKRS) and 127-175 (ARSR…QSKR). Basic and acidic residues predominate over residues 16–27 (HVYDGRSNEPKA). Positions 130-149 (RASSVSNSRLNSRTNSSVSL) are enriched in low complexity. The segment covering 154 to 175 (GSSSWKNKIKNAVSNVTDQSKR) has biased composition (polar residues).

The protein resides in the cytoplasm. Its subcellular location is the nucleus. This is an uncharacterized protein from Schizosaccharomyces pombe (strain 972 / ATCC 24843) (Fission yeast).